A 476-amino-acid chain; its full sequence is Bridging integrator 2 (476 aa).

The BAR domain occupies 26–242 (VLQKLGKTVE…MGKLDKQHSS (217 aa)). 2 disordered regions span residues 269–369 (YPCP…TEGA) and 395–476 (GAAP…LTPL). Over residues 279-292 (EPSSGAEQTPTSPR) the composition is skewed to polar residues. Residues 310–324 (PAEPGAPMPGPPPAS) are compositionally biased toward pro residues. Over residues 325-339 (PTSVRSASESESECS) the composition is skewed to low complexity. Positions 340-353 (GESREIDLSPKEME) are enriched in basic and acidic residues. Residues 461-476 (VSCNPPQDPSESLTPL) are compositionally biased toward polar residues.

Its subcellular location is the cytoplasm. In Gallus gallus (Chicken), this protein is Bridging integrator 2 (BIN2).